The following is a 72-amino-acid chain: ATP synthase protein 8 (72 aa).

The chain crosses the membrane as a helical span at residues 16–36 (WTLIALFLLFSFLVVSVLPAV).

This sequence belongs to the ATPase protein 8 family. F-type ATPases have 2 components, CF(1) - the catalytic core - and CF(0) - the membrane proton channel.

It is found in the mitochondrion membrane. In terms of biological role, mitochondrial membrane ATP synthase (F(1)F(0) ATP synthase or Complex V) produces ATP from ADP in the presence of a proton gradient across the membrane which is generated by electron transport complexes of the respiratory chain. F-type ATPases consist of two structural domains, F(1) - containing the extramembraneous catalytic core and F(0) - containing the membrane proton channel, linked together by a central stalk and a peripheral stalk. During catalysis, ATP synthesis in the catalytic domain of F(1) is coupled via a rotary mechanism of the central stalk subunits to proton translocation. Part of the complex F(0) domain. Minor subunit located with subunit a in the membrane. This is ATP synthase protein 8 (MTATP8) from Metridium senile (Brown sea anemone).